Consider the following 349-residue polypeptide: Ion-translocating oxidoreductase complex subunit D (349 aa).

The next 3 membrane-spanning stretches (helical) occupy residues 36–56, 77–99, and 124–144; these read CAFF…VALS, SAML…WMIV, and AMAA…SWIA. Thr185 bears the FMN phosphoryl threonine mark. A run of 5 helical transmembrane segments spans residues 212–232, 239–259, 265–285, 291–311, and 315–335; these read GTGV…LVLL, WHIS…GFLL, ASPL…FIAT, ATSP…VYVI, and GGYP…APFI.

This sequence belongs to the NqrB/RnfD family. The complex is composed of six subunits: RnfA, RnfB, RnfC, RnfD, RnfE and RnfG. FMN serves as cofactor.

Its subcellular location is the cell inner membrane. Its function is as follows. Part of a membrane-bound complex that couples electron transfer with translocation of ions across the membrane. This chain is Ion-translocating oxidoreductase complex subunit D, found in Shewanella sp. (strain MR-4).